The sequence spans 473 residues: MIDVIIAGGGPTGLMLAGELRLHGVRTVVLEKEPTPNQHSRSRGLHARSIEVMDQRGLLERFLAHGEQFRVGGFFAGLAAEWPADLDTAHSYVLAIPQVVTERLLTEHATELGAEIRRGCEVAGLDQDADGVTAELADGTRLRARYLVGCDGGRSTVRRLLGVDFPGEPTRVETLLADVRIDVPVETLTAVVAEVRKTQLRFGAVPAGDGFFRLIVPAQGLSADRAAPTLDELKRCLHATAGTDFGVHSPRWLSRFGDATRLAERYRTGRVLLAGDAAHIHPPTGGQGLNLGIQDAFNLGWKLAAAIGGWAPPDLLDSYHDERHPVAAEVLDNTRAQMTLLSLDPGPRAVRRLMAELVEFPDVNRHLIEKITAIAVRYDLGDGHDLVGRRLRDIPLTEGRLYERMRGGRGLLLDRTGRLSVSGWSDRVDHLADPGAALDVPAALLRPDGHVAWVGEDQDDLLAHLPRWFGAAT.

4 residues coordinate FAD: Thr-12, Glu-31, Lys-32, and Arg-41. Arg-43 lines the rifampicin pocket. The FAD site is built by Gln-98, Val-122, and Thr-156. Arg-196 is a rifampicin binding site. Asp-276 contacts FAD. Gly-285 serves as a coordination point for rifampicin. FAD contacts are provided by Leu-289 and Asn-290.

It belongs to the rifampicin monooxygenase family. As to quaternary structure, homodimer. Requires FAD as cofactor.

The catalysed reaction is rifampicin + NADPH + O2 = rifampicin para-naphthoquinone carboxamide + NADP(+) + H2O + H(+). The enzyme catalyses rifampicin + NADH + O2 = rifampicin para-naphthoquinone carboxamide + NAD(+) + H2O + H(+). Functionally, monooxygenase that can modify rifampicin, thereby inactivating its antibiotic activity. It constitutes a secondary rifampicin resistance factor. In Nocardia farcinica (strain IFM 10152), this protein is Rifampicin monooxygenase.